A 227-amino-acid chain; its full sequence is Cytochrome c oxidase subunit 2 (227 aa).

Topologically, residues 1–14 (MAYPFQLGLQDATS) are mitochondrial intermembrane. A helical transmembrane segment spans residues 15–45 (PIMEELTNFHDHTLMIVFLISSLVLYIISLM). Residues 46 to 59 (LTTKLTHTSTMDAQ) are Mitochondrial matrix-facing. The chain crosses the membrane as a helical span at residues 60-87 (EVETIWTILPAAILVLIALPSLRILYMM). Residues 88 to 227 (DEINNPVLTV…HFENWSASMV (140 aa)) are Mitochondrial intermembrane-facing. Positions 161, 196, 198, 200, 204, and 207 each coordinate Cu cation. Glutamate 198 is a binding site for Mg(2+).

Belongs to the cytochrome c oxidase subunit 2 family. In terms of assembly, component of the cytochrome c oxidase (complex IV, CIV), a multisubunit enzyme composed of 14 subunits. The complex is composed of a catalytic core of 3 subunits MT-CO1, MT-CO2 and MT-CO3, encoded in the mitochondrial DNA, and 11 supernumerary subunits COX4I, COX5A, COX5B, COX6A, COX6B, COX6C, COX7A, COX7B, COX7C, COX8 and NDUFA4, which are encoded in the nuclear genome. The complex exists as a monomer or a dimer and forms supercomplexes (SCs) in the inner mitochondrial membrane with NADH-ubiquinone oxidoreductase (complex I, CI) and ubiquinol-cytochrome c oxidoreductase (cytochrome b-c1 complex, complex III, CIII), resulting in different assemblies (supercomplex SCI(1)III(2)IV(1) and megacomplex MCI(2)III(2)IV(2)). Found in a complex with TMEM177, COA6, COX18, COX20, SCO1 and SCO2. Interacts with TMEM177 in a COX20-dependent manner. Interacts with COX20. Interacts with COX16. Cu cation is required as a cofactor.

It is found in the mitochondrion inner membrane. It catalyses the reaction 4 Fe(II)-[cytochrome c] + O2 + 8 H(+)(in) = 4 Fe(III)-[cytochrome c] + 2 H2O + 4 H(+)(out). Functionally, component of the cytochrome c oxidase, the last enzyme in the mitochondrial electron transport chain which drives oxidative phosphorylation. The respiratory chain contains 3 multisubunit complexes succinate dehydrogenase (complex II, CII), ubiquinol-cytochrome c oxidoreductase (cytochrome b-c1 complex, complex III, CIII) and cytochrome c oxidase (complex IV, CIV), that cooperate to transfer electrons derived from NADH and succinate to molecular oxygen, creating an electrochemical gradient over the inner membrane that drives transmembrane transport and the ATP synthase. Cytochrome c oxidase is the component of the respiratory chain that catalyzes the reduction of oxygen to water. Electrons originating from reduced cytochrome c in the intermembrane space (IMS) are transferred via the dinuclear copper A center (CU(A)) of subunit 2 and heme A of subunit 1 to the active site in subunit 1, a binuclear center (BNC) formed by heme A3 and copper B (CU(B)). The BNC reduces molecular oxygen to 2 water molecules using 4 electrons from cytochrome c in the IMS and 4 protons from the mitochondrial matrix. The polypeptide is Cytochrome c oxidase subunit 2 (MT-CO2) (Uromys caudimaculatus (Giant white-tailed rat)).